The following is a 476-amino-acid chain: UDP-N-acetylmuramoylalanine--D-glutamate ligase (476 aa).

Glycine 122–threonine 128 serves as a coordination point for ATP.

Belongs to the MurCDEF family.

The protein resides in the cytoplasm. It catalyses the reaction UDP-N-acetyl-alpha-D-muramoyl-L-alanine + D-glutamate + ATP = UDP-N-acetyl-alpha-D-muramoyl-L-alanyl-D-glutamate + ADP + phosphate + H(+). Its pathway is cell wall biogenesis; peptidoglycan biosynthesis. Functionally, cell wall formation. Catalyzes the addition of glutamate to the nucleotide precursor UDP-N-acetylmuramoyl-L-alanine (UMA). The polypeptide is UDP-N-acetylmuramoylalanine--D-glutamate ligase (Psychrobacter arcticus (strain DSM 17307 / VKM B-2377 / 273-4)).